The following is a 203-amino-acid chain: Small ribosomal subunit protein uS7 (203 aa).

Residues M1–A21 form a disordered region.

The protein belongs to the universal ribosomal protein uS7 family. As to quaternary structure, part of the 30S ribosomal subunit.

One of the primary rRNA binding proteins, it binds directly to 16S rRNA where it nucleates assembly of the head domain of the 30S subunit. Is located at the subunit interface close to the decoding center. This chain is Small ribosomal subunit protein uS7, found in Natronomonas pharaonis (strain ATCC 35678 / DSM 2160 / CIP 103997 / JCM 8858 / NBRC 14720 / NCIMB 2260 / Gabara) (Halobacterium pharaonis).